The following is a 1351-amino-acid chain: Serine-rich adhesin for platelets (1351 aa).

An N-terminal signal peptide occupies residues Met1 to Phe89. The interval Ala90–Ala230 is serine-rich repeat region 1, SRR1. The span at Leu100–Asn111 shows a compositional bias: polar residues. Disordered regions lie at residues Leu100 to Ser228 and Asn751 to Gly1323. 2 stretches are compositionally biased toward low complexity: residues Ser112 to Ser133 and Asn149 to Ser228. The segment at Pro231–Asn751 is non-repeat region (NRR). Residues Ser752–Glu1294 are compositionally biased toward low complexity. The tract at residues Ser752–Thr1312 is serine-rich repeat region 1, SRR1. The short motif at Leu1309–Gly1313 is the LPXTG sorting signal element. Thr1312 carries the pentaglycyl murein peptidoglycan amidated threonine modification. The propeptide at Gly1313–Ala1351 is removed by sortase.

The protein belongs to the serine-rich repeat protein (SRRP) family. Post-translationally, proteolytically cleaved by a metalloprotease. In terms of processing, glycosylated. It is probable that most of the Ser residues in SSR1 and SSR2 are O-GlcNAcylated. Sequential glycosylation by sugar transferases are able to generate complex sugar polymorphisms.

It localises to the secreted. Its subcellular location is the cell wall. In terms of biological role, mediates binding to human platelets, possibly through a receptor-ligand interaction. Probably associated with virulence in endovascular infection. The sequence is that of Serine-rich adhesin for platelets (sasA) from Staphylococcus aureus (strain MRSA252).